Here is a 320-residue protein sequence, read N- to C-terminus: uncharacterized protein (320 aa).

This sequence belongs to the NAD(P)-dependent epimerase/dehydratase family.

This is an uncharacterized protein from Staphylococcus saprophyticus subsp. saprophyticus (strain ATCC 15305 / DSM 20229 / NCIMB 8711 / NCTC 7292 / S-41).